The sequence spans 624 residues: Pentatricopeptide repeat-containing protein At2g32630 (624 aa).

13 PPR repeats span residues 153–187 (FEKF…GLSI), 188–222 (DERS…GVKI), 223–257 (TVYS…GIKP), 258–292 (EAYT…GVVY), 293–327 (NKVT…GIES), 328–362 (DVHV…GLSP), 363–397 (SSYT…GVNI), 398–432 (TQVV…GFQA), 433–467 (DVFT…GVKL), 468–502 (STVS…GVQP), 503–537 (NAIT…GMDP), 538–572 (DSYT…GLDQ), and 573–607 (NSVT…GYTI).

Belongs to the PPR family. P subfamily.

This is Pentatricopeptide repeat-containing protein At2g32630 from Arabidopsis thaliana (Mouse-ear cress).